A 441-amino-acid chain; its full sequence is tRNA (adenine(37)-N6)-methyltransferase (441 aa).

The 139-residue stretch at 30–168 (TEPVGYLESC…YIAEYDSPQN (139 aa)) folds into the TsaA-like domain. Residues 47–49 (PRQ), 90–91 (HK), R117, L127, and 148–151 (IHGT) contribute to the S-adenosyl-L-methionine site. Positions 179-192 (QNNQHTPNTVSQSD) are enriched in polar residues. Disordered regions lie at residues 179–231 (QNNQ…EENY) and 264–284 (SSVA…SEKG).

This sequence belongs to the tRNA methyltransferase O family.

The catalysed reaction is N(6)-L-threonylcarbamoyladenosine(37) in tRNA + S-adenosyl-L-methionine = N(6)-methyl,N(6)-L-threonylcarbamoyladenosine(37) in tRNA + S-adenosyl-L-homocysteine + H(+). In terms of biological role, S-adenosyl-L-methionine-dependent methyltransferase responsible for the addition of the methyl group in the formation of N6-methyl-N6-threonylcarbamoyladenosine at position 37 (m(6)t(6)A37) of the tRNA anticodon loop of tRNA(Ser)(GCU). The methyl group of m(6)t(6)A37 may improve the efficiency of the tRNA decoding ability. The protein is tRNA (adenine(37)-N6)-methyltransferase of Homo sapiens (Human).